Reading from the N-terminus, the 375-residue chain is Queuine tRNA-ribosyltransferase (375 aa).

Aspartate 94 acts as the Proton acceptor in catalysis. Substrate is bound by residues 94–98 (DSGGF), aspartate 148, glutamine 191, and glycine 218. The interval 249 to 255 (GVGTPED) is RNA binding. Aspartate 268 acts as the Nucleophile in catalysis. An RNA binding; important for wobble base 34 recognition region spans residues 273–277 (TRIAR). Cysteine 306, cysteine 308, cysteine 311, and histidine 337 together coordinate Zn(2+).

This sequence belongs to the queuine tRNA-ribosyltransferase family. Homodimer. Within each dimer, one monomer is responsible for RNA recognition and catalysis, while the other monomer binds to the replacement base PreQ1. It depends on Zn(2+) as a cofactor.

It catalyses the reaction 7-aminomethyl-7-carbaguanine + guanosine(34) in tRNA = 7-aminomethyl-7-carbaguanosine(34) in tRNA + guanine. Its pathway is tRNA modification; tRNA-queuosine biosynthesis. Its function is as follows. Catalyzes the base-exchange of a guanine (G) residue with the queuine precursor 7-aminomethyl-7-deazaguanine (PreQ1) at position 34 (anticodon wobble position) in tRNAs with GU(N) anticodons (tRNA-Asp, -Asn, -His and -Tyr). Catalysis occurs through a double-displacement mechanism. The nucleophile active site attacks the C1' of nucleotide 34 to detach the guanine base from the RNA, forming a covalent enzyme-RNA intermediate. The proton acceptor active site deprotonates the incoming PreQ1, allowing a nucleophilic attack on the C1' of the ribose to form the product. After dissociation, two additional enzymatic reactions on the tRNA convert PreQ1 to queuine (Q), resulting in the hypermodified nucleoside queuosine (7-(((4,5-cis-dihydroxy-2-cyclopenten-1-yl)amino)methyl)-7-deazaguanosine). In Caldanaerobacter subterraneus subsp. tengcongensis (strain DSM 15242 / JCM 11007 / NBRC 100824 / MB4) (Thermoanaerobacter tengcongensis), this protein is Queuine tRNA-ribosyltransferase.